The primary structure comprises 301 residues: Heterogeneous nuclear ribonucleoprotein D-like (301 aa).

The interval 1 to 29 (MEDATEMSGGAEEFAEGSKINASKNQQDD) is disordered. RRM domains are found at residues 30-112 (GKMF…KGKE) and 115-194 (KKVF…QPKE). 2 disordered regions span residues 194–230 (EVYRQQQQQQKGGKSNASGGRGGGRGRGRGQGQNWNQ) and 269–301 (GYGPGYTDYSGQQSTYGKASRGGGNHQNNYQPY). A compositionally biased stretch (gly residues) spans 212 to 224 (GGRGGGRGRGRGQ).

It localises to the nucleus. Its subcellular location is the cytoplasm. Acts as a transcriptional regulator. Binds DNA and RNA. The sequence is that of Heterogeneous nuclear ribonucleoprotein D-like (HNRNPDL) from Gallus gallus (Chicken).